Reading from the N-terminus, the 369-residue chain is 2-aminoethylphosphonate--pyruvate transaminase (369 aa).

Position 193 is an N6-(pyridoxal phosphate)lysine (K193).

The protein belongs to the class-V pyridoxal-phosphate-dependent aminotransferase family. PhnW subfamily. As to quaternary structure, homodimer. The cofactor is pyridoxal 5'-phosphate.

The catalysed reaction is (2-aminoethyl)phosphonate + pyruvate = phosphonoacetaldehyde + L-alanine. Functionally, involved in phosphonate degradation. The protein is 2-aminoethylphosphonate--pyruvate transaminase of Burkholderia mallei (strain NCTC 10247).